Consider the following 922-residue polypeptide: Periodic tryptophan protein 2 homolog (922 aa).

WD repeat units lie at residues 12 to 52 (GTVY…TLPI), 53 to 92 (QSKY…VLGE), 94 to 132 (KFFK…KQPN), 141 to 180 (THKS…VSYF), 182 to 221 (VKGS…EMEQ), 271 to 310 (GVKC…QLYK), 313 to 353 (ISSH…YILK), 356 to 395 (GHSY…CYIT), 398 to 439 (EHEG…NFRT), 443 to 485 (PNKT…DILS), 486 to 525 (GHQS…EIRE), 528 to 567 (QHTS…QIGL), 590 to 629 (SAGR…LIKK), and 691 to 731 (KKKQ…DPTD). Positions 893–922 (ESKKNKEQEEDQFSDDEETVYQNNKKNKNK) are disordered. A compositionally biased stretch (acidic residues) spans 900-911 (QEEDQFSDDEET).

It belongs to the WD repeat PWP2 family. In terms of assembly, part of the small subunit (SSU) processome, composed of more than 70 proteins and the RNA chaperone small nucleolar RNA (snoRNA) U3.

Its subcellular location is the nucleus. The protein localises to the nucleolus. In terms of biological role, part of the small subunit (SSU) processome, first precursor of the small eukaryotic ribosomal subunit. During the assembly of the SSU processome in the nucleolus, many ribosome biogenesis factors, an RNA chaperone and ribosomal proteins associate with the nascent pre-rRNA and work in concert to generate RNA folding, modifications, rearrangements and cleavage as well as targeted degradation of pre-ribosomal RNA by the RNA exosome. The protein is Periodic tryptophan protein 2 homolog (pwp2) of Dictyostelium discoideum (Social amoeba).